The chain runs to 427 residues: UPF0229 protein YeaH (427 aa).

A compositionally biased stretch (basic and acidic residues) spans 79-90 (NDHFIQNDRIER). The interval 79–110 (NDHFIQNDRIERPQGGGGGSGSGQGQASQDGE) is disordered. Over residues 92 to 102 (QGGGGGSGSGQ) the composition is skewed to gly residues.

This sequence belongs to the UPF0229 family.

This chain is UPF0229 protein YeaH, found in Salmonella paratyphi B (strain ATCC BAA-1250 / SPB7).